The primary structure comprises 141 residues: Large ribosomal subunit protein uL11 (141 aa).

It belongs to the universal ribosomal protein uL11 family. In terms of assembly, part of the ribosomal stalk of the 50S ribosomal subunit. Interacts with L10 and the large rRNA to form the base of the stalk. L10 forms an elongated spine to which L12 dimers bind in a sequential fashion forming a multimeric L10(L12)X complex. Post-translationally, one or more lysine residues are methylated.

Its function is as follows. Forms part of the ribosomal stalk which helps the ribosome interact with GTP-bound translation factors. The chain is Large ribosomal subunit protein uL11 from Fervidobacterium nodosum (strain ATCC 35602 / DSM 5306 / Rt17-B1).